We begin with the raw amino-acid sequence, 383 residues long: Interleukin-13 receptor subunit alpha-2 (383 aa).

An N-terminal signal peptide occupies residues 1-21 (MAFVHIRCLCFILLCTITGYS). The Extracellular portion of the chain corresponds to 22-334 (LEIKVNPPQD…WEGYTGPDSK (313 aa)). Fibronectin type-III domains lie at 28–128 (PPQD…SDEG), 131–219 (ETKI…PIRS), and 234–332 (PPEF…TGPD). A disulfide bond links cysteine 59 and cysteine 107. N-linked (GlcNAc...) asparagine glycosylation occurs at asparagine 109. Residues cysteine 139 and cysteine 149 are joined by a disulfide bond. A glycan (N-linked (GlcNAc...) asparagine) is linked at asparagine 162. Cysteine 178 and cysteine 191 are joined by a disulfide. Residues asparagine 209 and asparagine 293 are each glycosylated (N-linked (GlcNAc...) asparagine). Cysteine 263 and cysteine 310 are joined by a disulfide. The WSXWS motif signature appears at 316–320 (WSEWS). The chain crosses the membrane as a helical span at residues 335–355 (IIFIVPVCLFFIFLLLLLCLI). The Cytoplasmic segment spans residues 356 to 383 (VEKEEPEPTLSLHVDLNKEVCAYEDTLC).

This sequence belongs to the type I cytokine receptor family. Type 5 subfamily. In terms of assembly, interacts with IL4RA. Interacts with high affinity to interleukin-13 (IL13), but not to interleukin-4 (IL4). Post-translationally, cleaved by MMP8 leading to a soluble form that is also able to interact with IL13.

The protein resides in the cell membrane. The protein localises to the secreted. Its function is as follows. Cell surface receptor that plays a role in the regulation of IL-13-mediated responses. Functions as a decoy receptor that inhibits IL-13- and IL-4-mediated signal transduction via the JAK-STAT pathway and thereby modulates immune responses and inflammation. Serves as a functional signaling receptor for IL-13 in an alternative pathway involving AP-1 ultimately leading to the production of TGFB1. This chain is Interleukin-13 receptor subunit alpha-2 (Il13ra2), found in Mus musculus (Mouse).